Reading from the N-terminus, the 391-residue chain is uncharacterized protein (391 aa).

Residues S118–P149 are compositionally biased toward low complexity. 4 disordered regions span residues S118–P162, Q184–N258, N272–N327, and L337–N356. The segment covering Q150 to P162 has biased composition (basic residues). Positions N186 to N211 are enriched in low complexity. The span at D212 to T223 shows a compositional bias: polar residues. A compositionally biased stretch (low complexity) spans N244 to P256.

This is an uncharacterized protein from Dictyostelium discoideum (Social amoeba).